The sequence spans 987 residues: Leucine--tRNA ligase (987 aa).

A 'HIGH' region motif is present at residues 69-80 (PYPSGKGLHVGH). The 'KMSKS' region signature appears at 760 to 764 (KMGKS). ATP is bound at residue Lys-763.

This sequence belongs to the class-I aminoacyl-tRNA synthetase family.

It is found in the cytoplasm. The catalysed reaction is tRNA(Leu) + L-leucine + ATP = L-leucyl-tRNA(Leu) + AMP + diphosphate. The protein is Leucine--tRNA ligase of Bifidobacterium longum (strain DJO10A).